A 32-amino-acid polypeptide reads, in one-letter code: FSGLEAAIVLIAFVVVAAVFSYVMLGAGFFAT.

It belongs to the archaeal flagellin family. In terms of processing, glycosylated.

The protein localises to the archaeal flagellum. Flagellin is the subunit protein which polymerizes to form the filaments of archaeal flagella. This is 24 kDa flagellin from Methanospirillum hungatei.